Consider the following 307-residue polypeptide: Thymidylate synthase (307 aa).

Residues 1–22 (MLVEGSELQSGAQQPRTEAPQH) are disordered. Residues 7–16 (ELQSGAQQPR) are compositionally biased toward polar residues. DUMP is bound at residue Arg-44. Ser-108 is modified (phosphoserine). DUMP-binding positions include 169-170 (RR), 189-190 (CH), 209-212 (RSGD), Asn-220, and 250-252 (HIY). Cys-189 functions as the Nucleophile in the catalytic mechanism. Asp-212 serves as a coordination point for (6R)-5,10-methylene-5,6,7,8-tetrahydrofolate. Residues Lys-286 and Lys-302 each participate in a glycyl lysine isopeptide (Lys-Gly) (interchain with G-Cter in SUMO2) cross-link. Ala-306 contacts (6R)-5,10-methylene-5,6,7,8-tetrahydrofolate.

It belongs to the thymidylate synthase family. Homodimer.

Its subcellular location is the nucleus. It is found in the cytoplasm. The protein resides in the mitochondrion. The protein localises to the mitochondrion matrix. It localises to the mitochondrion inner membrane. It carries out the reaction dUMP + (6R)-5,10-methylene-5,6,7,8-tetrahydrofolate = 7,8-dihydrofolate + dTMP. It participates in pyrimidine metabolism; dTTP biosynthesis. Functionally, catalyzes the reductive methylation of 2'-deoxyuridine 5'-monophosphate (dUMP) to thymidine 5'-monophosphate (dTMP), using the cosubstrate, 5,10- methylenetetrahydrofolate (CH2H4folate) as a 1-carbon donor and reductant and contributes to the de novo mitochondrial thymidylate biosynthesis pathway. This Rattus norvegicus (Rat) protein is Thymidylate synthase (Tyms).